A 353-amino-acid chain; its full sequence is Transcription termination/antitermination protein NusG (353 aa).

In terms of domain architecture, KOW spans 301–335 (VGDMVKIISGPFEDFAGVIKEIDPERQELKVNVTI).

This sequence belongs to the NusG family.

Regulated by autoinhibition via interaction of the N-terminal and the C-terminal domains. Autoinhibition may prevent NusG from interacting prematurely with other components of the transcription complex or non-specific interactions with other cellular components. In terms of biological role, participates in transcription elongation, termination and antitermination. The sequence is that of Transcription termination/antitermination protein NusG from Thermotoga maritima (strain ATCC 43589 / DSM 3109 / JCM 10099 / NBRC 100826 / MSB8).